The primary structure comprises 481 residues: UDP-N-acetylmuramoyl-L-alanyl-D-glutamate--L-lysine ligase (481 aa).

Ser42 serves as a coordination point for UDP-N-acetyl-alpha-D-muramoyl-L-alanyl-D-glutamate. Residue 118–124 (GTKGKTT) coordinates ATP. UDP-N-acetyl-alpha-D-muramoyl-L-alanyl-D-glutamate is bound by residues Gln158, 160–161 (TT), Ser187, and Arg195. At Lys229 the chain carries N6-carboxylysine. The short motif at 404 to 407 (DDPN) is the L-lysine recognition motif element.

The protein belongs to the MurCDEF family. MurE subfamily. Carboxylation is probably crucial for Mg(2+) binding and, consequently, for the gamma-phosphate positioning of ATP.

The protein resides in the cytoplasm. The enzyme catalyses UDP-N-acetyl-alpha-D-muramoyl-L-alanyl-D-glutamate + L-lysine + ATP = UDP-N-acetyl-alpha-D-muramoyl-L-alanyl-gamma-D-glutamyl-L-lysine + ADP + phosphate + H(+). It functions in the pathway cell wall biogenesis; peptidoglycan biosynthesis. In terms of biological role, catalyzes the addition of L-lysine to the nucleotide precursor UDP-N-acetylmuramoyl-L-alanyl-D-glutamate (UMAG) in the biosynthesis of bacterial cell-wall peptidoglycan. The sequence is that of UDP-N-acetylmuramoyl-L-alanyl-D-glutamate--L-lysine ligase from Streptococcus pyogenes serotype M6 (strain ATCC BAA-946 / MGAS10394).